A 262-amino-acid polypeptide reads, in one-letter code: Glutamate racemase (262 aa).

Residues 7 to 8 and 39 to 40 contribute to the substrate site; these read DS and YG. Residue C70 is the Proton donor/acceptor of the active site. Residue 71 to 72 participates in substrate binding; the sequence is NT. C182 functions as the Proton donor/acceptor in the catalytic mechanism. Residue 183–184 participates in substrate binding; that stretch reads TH.

Belongs to the aspartate/glutamate racemases family.

The enzyme catalyses L-glutamate = D-glutamate. It participates in cell wall biogenesis; peptidoglycan biosynthesis. Its function is as follows. Provides the (R)-glutamate required for cell wall biosynthesis. The polypeptide is Glutamate racemase (Campylobacter concisus (strain 13826)).